We begin with the raw amino-acid sequence, 198 residues long: Basic helix-loop-helix transcription factor amos (198 aa).

Positions 76–131 (EQQQHHLQANPLGKNQGRSPRYWNKQQRSKPYDKLSTSMSSSTSSASSSSSSSAGF) are disordered. Residues 111–129 (STSMSSSTSSASSSSSSSA) are compositionally biased toward low complexity. One can recognise a bHLH domain in the interval 138-190 (KRRLAANARERRRMNSLNDAFDKLRDVVPSLGHDRRLSKYETLQMAQAYIGDL).

Efficient DNA binding requires dimerization with another bHLH protein. Interacts with Daughterless (da). During embryonic development, expression is seen in a small cluster of ectodermal cells during stage 10 which becomes restricted to 1 cell by stage 11. Expression is lost from this cell in the thorax and then the abdomen. Later expression is restricted to sensory organ precursors. Very transient expression was detected in distal leg disks at approximately 0-4 hours after puparium formation (APF), correlating with the anlage of the innervated tarsal claw.

It localises to the nucleus. Transcription factor involved in early neurogenesis; sensillum basiconica formation and maybe sensillum trichodea development. Promotes multiple dendritic (MD) neuron formation. Required for olfactory sensilla; regulated by lozenge (lz). This is Basic helix-loop-helix transcription factor amos (amos) from Drosophila melanogaster (Fruit fly).